Consider the following 46-residue polypeptide: Photosystem II reaction center protein K (46 aa).

Residues 1 to 9 (MLILFNTFA) constitute a propeptide that is removed on maturation. A helical transmembrane segment spans residues 25 to 45 (LPLIPLFFFLLVFVWQAAVGF).

The protein belongs to the PsbK family. In terms of assembly, PSII is composed of 1 copy each of membrane proteins PsbA, PsbB, PsbC, PsbD, PsbE, PsbF, PsbH, PsbI, PsbJ, PsbK, PsbL, PsbM, PsbT, PsbX, PsbY, Psb30/Ycf12, peripheral proteins PsbO, CyanoQ (PsbQ), PsbU, PsbV and a large number of cofactors. It forms dimeric complexes.

The protein resides in the cellular thylakoid membrane. Functionally, one of the components of the core complex of photosystem II (PSII). PSII is a light-driven water:plastoquinone oxidoreductase that uses light energy to abstract electrons from H(2)O, generating O(2) and a proton gradient subsequently used for ATP formation. It consists of a core antenna complex that captures photons, and an electron transfer chain that converts photonic excitation into a charge separation. This is Photosystem II reaction center protein K from Prochlorococcus marinus (strain MIT 9301).